The sequence spans 45 residues: Large ribosomal subunit protein bL34 (45 aa).

The protein belongs to the bacterial ribosomal protein bL34 family.

The polypeptide is Large ribosomal subunit protein bL34 (rpmH) (Streptomyces bikiniensis).